Reading from the N-terminus, the 385-residue chain is Alanine racemase (385 aa).

Lysine 40 acts as the Proton acceptor; specific for D-alanine in catalysis. Lysine 40 is subject to N6-(pyridoxal phosphate)lysine. Arginine 139 contacts substrate. Catalysis depends on tyrosine 268, which acts as the Proton acceptor; specific for L-alanine. Methionine 315 provides a ligand contact to substrate.

This sequence belongs to the alanine racemase family. It depends on pyridoxal 5'-phosphate as a cofactor.

The catalysed reaction is L-alanine = D-alanine. It participates in amino-acid biosynthesis; D-alanine biosynthesis; D-alanine from L-alanine: step 1/1. In terms of biological role, catalyzes the interconversion of L-alanine and D-alanine. May also act on other amino acids. In Anoxybacillus flavithermus (strain DSM 21510 / WK1), this protein is Alanine racemase (alr).